A 206-amino-acid chain; its full sequence is Small ribosomal subunit protein uS4 (206 aa).

Positions S96–A158 constitute an S4 RNA-binding domain.

The protein belongs to the universal ribosomal protein uS4 family. Part of the 30S ribosomal subunit. Contacts protein S5. The interaction surface between S4 and S5 is involved in control of translational fidelity.

One of the primary rRNA binding proteins, it binds directly to 16S rRNA where it nucleates assembly of the body of the 30S subunit. In terms of biological role, with S5 and S12 plays an important role in translational accuracy. This Francisella tularensis subsp. mediasiatica (strain FSC147) protein is Small ribosomal subunit protein uS4.